The chain runs to 368 residues: Peptide chain release factor 2 (368 aa).

Residue glutamine 250 is modified to N5-methylglutamine.

This sequence belongs to the prokaryotic/mitochondrial release factor family. Methylated by PrmC. Methylation increases the termination efficiency of RF2.

Its subcellular location is the cytoplasm. Peptide chain release factor 2 directs the termination of translation in response to the peptide chain termination codons UGA and UAA. The sequence is that of Peptide chain release factor 2 from Rickettsia bellii (strain RML369-C).